A 193-amino-acid polypeptide reads, in one-letter code: Acyl carrier protein phosphodiesterase (193 aa).

The protein belongs to the AcpH family.

It carries out the reaction holo-[ACP] + H2O = apo-[ACP] + (R)-4'-phosphopantetheine + H(+). In terms of biological role, converts holo-ACP to apo-ACP by hydrolytic cleavage of the phosphopantetheine prosthetic group from ACP. The polypeptide is Acyl carrier protein phosphodiesterase (Enterobacter sp. (strain 638)).